The sequence spans 182 residues: Methyl-coenzyme M reductase operon protein C (182 aa).

As to quaternary structure, MCR is composed of three subunits: alpha, beta, and gamma. The function of proteins C and D is not known.

The protein is Methyl-coenzyme M reductase operon protein C (mcrC) of Methanococcus voltae.